Consider the following 293-residue polypeptide: Pantothenate synthetase (293 aa).

30–37 (MGYLHKGH) provides a ligand contact to ATP. The Proton donor role is filled by His37. Gln61 contacts (R)-pantoate. Gln61 contributes to the beta-alanine binding site. Position 147–150 (147–150 (GEKD)) interacts with ATP. Gln153 provides a ligand contact to (R)-pantoate. ATP is bound by residues Val176 and 184 to 187 (CSSR).

This sequence belongs to the pantothenate synthetase family. Homodimer.

It is found in the cytoplasm. It catalyses the reaction (R)-pantoate + beta-alanine + ATP = (R)-pantothenate + AMP + diphosphate + H(+). The protein operates within cofactor biosynthesis; (R)-pantothenate biosynthesis; (R)-pantothenate from (R)-pantoate and beta-alanine: step 1/1. In terms of biological role, catalyzes the condensation of pantoate with beta-alanine in an ATP-dependent reaction via a pantoyl-adenylate intermediate. This chain is Pantothenate synthetase, found in Brucella abortus (strain S19).